The following is a 298-amino-acid chain: H-2 class I histocompatibility antigen, alpha chain (298 aa).

Over 1–244 (RYEPRARWIE…EPPSSTKTNT (244 aa)) the chain is Extracellular. Asn-43 carries N-linked (GlcNAc...) asparagine glycosylation. Residues Cys-58 and Cys-121 are joined by a disulfide bond. Asn-133 carries an N-linked (GlcNAc...) asparagine glycan. The 89-residue stretch at 142 to 230 (PKAHVTHHRR…EGLPEPLTLR (89 aa)) folds into the Ig-like C1-type domain. A disulfide bond links Cys-160 and Cys-216. Residues 245 to 265 (VIIAVPVVLGAVVILGAVMAF) traverse the membrane as a helical segment. The Cytoplasmic segment spans residues 266–298 (VMKRRRNTGGKGGDYALAPVSQSSDMSLPDCKV). The segment at 277–298 (GGDYALAPVSQSSDMSLPDCKV) is disordered. A phosphoserine mark is found at Ser-289 and Ser-292.

This sequence belongs to the MHC class I family. Heterodimer of an alpha chain and a beta chain (beta-2-microglobulin).

It localises to the membrane. In terms of biological role, involved in the presentation of foreign antigens to the immune system. This chain is H-2 class I histocompatibility antigen, alpha chain (H2-D1), found in Mus musculus (Mouse).